Consider the following 167-residue polypeptide: UPF0114 protein in repA1-repA2 intergenic region (167 aa).

Transmembrane regions (helical) follow at residues 15–35 (LMFP…LKFF), 53–73 (LVLV…LVMV), and 136–156 (IMLC…MAYI).

This sequence belongs to the UPF0114 family.

It localises to the cell membrane. This chain is UPF0114 protein in repA1-repA2 intergenic region, found in Buchnera aphidicola subsp. Diuraphis noxia.